We begin with the raw amino-acid sequence, 547 residues long: Chaperonin GroEL (547 aa).

ATP contacts are provided by residues 29–32, Lys-50, 86–90, Gly-414, 477–479, and Asp-493; these read TMGP, DGTTT, and NAA.

This sequence belongs to the chaperonin (HSP60) family. As to quaternary structure, forms a cylinder of 14 subunits composed of two heptameric rings stacked back-to-back. Interacts with the co-chaperonin GroES.

The protein resides in the cytoplasm. The enzyme catalyses ATP + H2O + a folded polypeptide = ADP + phosphate + an unfolded polypeptide.. Its function is as follows. Together with its co-chaperonin GroES, plays an essential role in assisting protein folding. The GroEL-GroES system forms a nano-cage that allows encapsulation of the non-native substrate proteins and provides a physical environment optimized to promote and accelerate protein folding. In Campylobacter rectus (Wolinella recta), this protein is Chaperonin GroEL.